The chain runs to 55 residues: MAVQQNKPTRSKRGMRRSHDALTTATLSVDKASGETHLRHHITADGFYRGRKVIG.

The disordered stretch occupies residues 1 to 28 (MAVQQNKPTRSKRGMRRSHDALTTATLS).

It belongs to the bacterial ribosomal protein bL32 family.

In Serratia proteamaculans (strain 568), this protein is Large ribosomal subunit protein bL32.